Here is a 215-residue protein sequence, read N- to C-terminus: Vesicle-trafficking protein SEC22b (215 aa).

The Cytoplasmic segment spans residues 2-194; sequence VLLTMIARVA…KYLNMRSTYA (193 aa). The region spanning 6–119 is the Longin domain; the sequence is MIARVADGLP…YSFIEFDTFI (114 aa). Residue lysine 38 is modified to N6-acetyllysine. Residues 134 to 194 form the v-SNARE coiled-coil homology domain; it reads NLGSINTELQ…KYLNMRSTYA (61 aa). The residue at position 137 (serine 137) is a Phosphoserine. The residue at position 140 (threonine 140) is a Phosphothreonine. Phosphoserine occurs at positions 164, 168, 174, and 177. Residues 195 to 215 traverse the membrane as a helical; Anchor for type IV membrane protein segment; sequence KLAAVAVFFIMLIVYVRFWWL.

The protein belongs to the synaptobrevin family. In terms of assembly, interacts with STX17. Component of two distinct SNARE complexes consisting of STX5, GOSR2/BOS1, BET1 and SEC22B or STX18, USE1L, BNIP1/SEC20L and SEC22B. YKT6 can probably replace SEC22B in either complex. Interacts with the COPII Sec23/24 complex composed of SEC23A and SEC24A; recruits SEC22B into COPII-coated vesicles to allow its transport from the endoplasmic reticulum to the Golgi. Interacts with BET1.

It is found in the endoplasmic reticulum membrane. It localises to the endoplasmic reticulum-Golgi intermediate compartment membrane. Its subcellular location is the golgi apparatus. The protein localises to the cis-Golgi network membrane. The protein resides in the trans-Golgi network membrane. It is found in the melanosome. In terms of biological role, SNARE involved in targeting and fusion of ER-derived transport vesicles with the Golgi complex as well as Golgi-derived retrograde transport vesicles with the ER. In Homo sapiens (Human), this protein is Vesicle-trafficking protein SEC22b (SEC22B).